A 599-amino-acid chain; its full sequence is UPF0313 protein UNCMA_01890 (599 aa).

The Radical SAM core domain maps to Glu-281 to Glu-557. Positions 299, 303, and 306 each coordinate [4Fe-4S] cluster.

This sequence belongs to the UPF0313 family. Requires [4Fe-4S] cluster as cofactor.

This chain is UPF0313 protein UNCMA_01890, found in Methanocella arvoryzae (strain DSM 22066 / NBRC 105507 / MRE50).